A 429-amino-acid chain; its full sequence is SVP1-like protein 2 (429 aa).

WD repeat units follow at residues 10–48, 50–96, 178–218, and 223–262; these read PVLA…LRTS, DFGA…QVGV, AHTS…RLYE, and IDKA…GTRP. The tract at residues 262–297 is disordered; that stretch reads PITSNGGTAYAAGEPSVTGNNRPSSPYSVASSSGGG.

It belongs to the WD repeat PROPPIN family.

Its subcellular location is the vacuole membrane. It is found in the cytoplasmic vesicle membrane. Functionally, involved in mitochondrial or peroxisomal functions and amino acid signaling pathways. This is SVP1-like protein 2 (apg-14) from Neurospora crassa (strain ATCC 24698 / 74-OR23-1A / CBS 708.71 / DSM 1257 / FGSC 987).